The sequence spans 563 residues: GTPase Obg (563 aa).

Positions 2–168 (SDFVDRVTVH…RDVILELKSI (167 aa)) constitute an Obg domain. The region spanning 169–349 (ADVALVGFPS…LNFALSALVH (181 aa)) is the OBG-type G domain. Residues 175-182 (GFPSAGKS), 200-204 (FTTLV), 221-224 (DVPG), 301-304 (NKID), and 330-332 (STA) each bind GTP. Residues Ser-182 and Thr-202 each contribute to the Mg(2+) site. Positions 383–469 (DEGGSALEFT…ARMVEFDWDP (87 aa)) constitute an OCT domain. Residues 529 to 563 (RKAGHWADPTVDDDRHDETSLFGHGESSEDGETEE) form a disordered region.

It belongs to the TRAFAC class OBG-HflX-like GTPase superfamily. OBG GTPase family. As to quaternary structure, monomer. The cofactor is Mg(2+).

The protein resides in the cytoplasm. An essential GTPase which binds GTP, GDP and possibly (p)ppGpp with moderate affinity, with high nucleotide exchange rates and a fairly low GTP hydrolysis rate. Plays a role in control of the cell cycle, stress response, ribosome biogenesis and in those bacteria that undergo differentiation, in morphogenesis control. The sequence is that of GTPase Obg from Bifidobacterium longum (strain NCC 2705).